A 241-amino-acid chain; its full sequence is Ubiquinone biosynthesis O-methyltransferase (241 aa).

Arginine 46, glycine 66, aspartate 87, and methionine 131 together coordinate S-adenosyl-L-methionine.

This sequence belongs to the methyltransferase superfamily. UbiG/COQ3 family.

The catalysed reaction is a 3-demethylubiquinol + S-adenosyl-L-methionine = a ubiquinol + S-adenosyl-L-homocysteine + H(+). It carries out the reaction a 3-(all-trans-polyprenyl)benzene-1,2-diol + S-adenosyl-L-methionine = a 2-methoxy-6-(all-trans-polyprenyl)phenol + S-adenosyl-L-homocysteine + H(+). It functions in the pathway cofactor biosynthesis; ubiquinone biosynthesis. Functionally, O-methyltransferase that catalyzes the 2 O-methylation steps in the ubiquinone biosynthetic pathway. The chain is Ubiquinone biosynthesis O-methyltransferase from Bordetella parapertussis (strain 12822 / ATCC BAA-587 / NCTC 13253).